Here is a 155-residue protein sequence, read N- to C-terminus: Interferon gamma (155 aa).

Residues 1-22 (MNATHCILALQLFLMAVSGCYC) form the signal peptide. N-linked (GlcNAc...) asparagine glycans are attached at residues Asn38 and Asn90.

This sequence belongs to the type II (or gamma) interferon family. Homodimer. Interacts with IFNGR1 (via extracellular domain); this interaction promotes IFNGR1 dimerization. In terms of tissue distribution, released primarily from activated T lymphocytes.

The protein resides in the secreted. In terms of biological role, type II interferon produced by immune cells such as T-cells and NK cells that plays crucial roles in antimicrobial, antiviral, and antitumor responses by activating effector immune cells and enhancing antigen presentation. Primarily signals through the JAK-STAT pathway after interaction with its receptor IFNGR1 to affect gene regulation. Upon IFNG binding, IFNGR1 intracellular domain opens out to allow association of downstream signaling components JAK2, JAK1 and STAT1, leading to STAT1 activation, nuclear translocation and transcription of IFNG-regulated genes. Many of the induced genes are transcription factors such as IRF1 that are able to further drive regulation of a next wave of transcription. Plays a role in class I antigen presentation pathway by inducing a replacement of catalytic proteasome subunits with immunoproteasome subunits. In turn, increases the quantity, quality, and repertoire of peptides for class I MHC loading. Increases the efficiency of peptide generation also by inducing the expression of activator PA28 that associates with the proteasome and alters its proteolytic cleavage preference. Up-regulates as well MHC II complexes on the cell surface by promoting expression of several key molecules such as cathepsins B/CTSB, H/CTSH, and L/CTSL. Participates in the regulation of hematopoietic stem cells during development and under homeostatic conditions by affecting their development, quiescence, and differentiation. The sequence is that of Interferon gamma (Ifng) from Mus musculus (Mouse).